Reading from the N-terminus, the 438-residue chain is ATP phosphoribosyltransferase regulatory subunit (438 aa).

Belongs to the class-II aminoacyl-tRNA synthetase family. HisZ subfamily. In terms of assembly, heteromultimer composed of HisG and HisZ subunits.

Its subcellular location is the cytoplasm. It functions in the pathway amino-acid biosynthesis; L-histidine biosynthesis; L-histidine from 5-phospho-alpha-D-ribose 1-diphosphate: step 1/9. Required for the first step of histidine biosynthesis. May allow the feedback regulation of ATP phosphoribosyltransferase activity by histidine. The chain is ATP phosphoribosyltransferase regulatory subunit from Geobacter sulfurreducens (strain ATCC 51573 / DSM 12127 / PCA).